We begin with the raw amino-acid sequence, 150 residues long: Large ribosomal subunit protein uL13 (150 aa).

Positions G128–K150 are disordered.

It belongs to the universal ribosomal protein uL13 family. In terms of assembly, part of the 50S ribosomal subunit.

In terms of biological role, this protein is one of the early assembly proteins of the 50S ribosomal subunit, although it is not seen to bind rRNA by itself. It is important during the early stages of 50S assembly. The chain is Large ribosomal subunit protein uL13 from Prochlorococcus marinus (strain NATL1A).